The sequence spans 64 residues: MSGREGGKKKPLKAPKKQSKDMDDDDVAFKQKQKEDQKAMEALKARASGKGPLGGSGIKKSGKK.

The disordered stretch occupies residues 1 to 64 (MSGREGGKKK…GSGIKKSGKK (64 aa)). Positions 21 to 50 (DMDDDDVAFKQKQKEDQKAMEALKARASGK) form a coiled coil. Basic and acidic residues predominate over residues 27–44 (VAFKQKQKEDQKAMEALK).

Belongs to the TMA7 family.

In Tetraodon nigroviridis (Spotted green pufferfish), this protein is Translation machinery-associated protein 7 (tma7).